The following is a 96-amino-acid chain: Small ribosomal subunit protein bS6 (96 aa).

This sequence belongs to the bacterial ribosomal protein bS6 family.

In terms of biological role, binds together with bS18 to 16S ribosomal RNA. This Mycobacteroides abscessus (strain ATCC 19977 / DSM 44196 / CCUG 20993 / CIP 104536 / JCM 13569 / NCTC 13031 / TMC 1543 / L948) (Mycobacterium abscessus) protein is Small ribosomal subunit protein bS6.